Consider the following 683-residue polypeptide: Protein kinase C eta type (683 aa).

The 118-residue stretch at 1 to 118 (MSSGTMKFNG…LRTAGTSDTF (118 aa)) folds into the C2 domain. Residues Ser28 and Ser32 each carry the phosphoserine modification. Phorbol-ester/DAG-type zinc fingers lie at residues 171 to 222 (GHKF…VTAC) and 245 to 295 (PHKF…APNC). Position 317 is a phosphoserine (Ser317). The Protein kinase domain maps to 355-614 (FEFIRVLGKG…EHEILRHPFF (260 aa)). ATP contacts are provided by residues 361 to 369 (LGKGSFGKV) and Lys384. Asp479 acts as the Proton acceptor in catalysis. Position 513 is a phosphothreonine; by PDPK1 (Thr513). Positions 615-683 (KEIDWVQLNH…FSYVSPELQP (69 aa)) constitute an AGC-kinase C-terminal domain. Thr656 is modified (phosphothreonine). Ser675 is modified (phosphoserine).

This sequence belongs to the protein kinase superfamily. AGC Ser/Thr protein kinase family. PKC subfamily. As to quaternary structure, interacts with FYN. Interacts with RALA. Interacts with DGKQ.

The protein localises to the cytoplasm. It catalyses the reaction L-seryl-[protein] + ATP = O-phospho-L-seryl-[protein] + ADP + H(+). The catalysed reaction is L-threonyl-[protein] + ATP = O-phospho-L-threonyl-[protein] + ADP + H(+). Its activity is regulated as follows. Novel PKCs (PRKCD, PRKCE, PRKCH and PRKCQ) are calcium-insensitive, but activated by diacylglycerol (DAG) and phosphatidylserine. Three specific sites; Thr-513 (activation loop of the kinase domain), Thr-656 (turn motif) and Ser-675 (hydrophobic region), need to be phosphorylated for its full activation. In terms of biological role, calcium-independent, phospholipid- and diacylglycerol (DAG)-dependent serine/threonine-protein kinase that is involved in the regulation of cell differentiation in keratinocytes and pre-B cell receptor, mediates regulation of epithelial tight junction integrity and foam cell formation, and is required for glioblastoma proliferation and apoptosis prevention in MCF-7 cells. In keratinocytes, binds and activates the tyrosine kinase FYN, which in turn blocks epidermal growth factor receptor (EGFR) signaling and leads to keratinocyte growth arrest and differentiation. Associates with the cyclin CCNE1-CDK2-CDKN1B complex and inhibits CDK2 kinase activity, leading to RB1 dephosphorylation and thereby G1 arrest in keratinocytes. In association with RALA activates actin depolymerization, which is necessary for keratinocyte differentiation. In the pre-B cell receptor signaling, functions downstream of BLNK by up-regulating IRF4, which in turn activates L chain gene rearrangement. Regulates epithelial tight junctions (TJs) by phosphorylating occludin (OCLN) on threonine residues, which is necessary for the assembly and maintenance of TJs. In association with PLD2 and via TLR4 signaling, is involved in lipopolysaccharide (LPS)-induced RGS2 down-regulation and foam cell formation. Upon PMA stimulation, mediates glioblastoma cell proliferation by activating the mTOR pathway, the PI3K/AKT pathway and the ERK1-dependent phosphorylation of ELK1. Involved in the protection of glioblastoma cells from irradiation-induced apoptosis by preventing caspase-9 activation. In camptothecin-treated MCF-7 cells, regulates NF-kappa-B upstream signaling by activating IKBKB, and confers protection against DNA damage-induced apoptosis. Promotes oncogenic functions of ATF2 in the nucleus while blocking its apoptotic function at mitochondria. Phosphorylates ATF2 which promotes its nuclear retention and transcriptional activity and negatively regulates its mitochondrial localization. In Rattus norvegicus (Rat), this protein is Protein kinase C eta type (Prkch).